The primary structure comprises 448 residues: Microtubule-associated protein tau (448 aa).

The segment covering 1 to 16 has biased composition (basic and acidic residues); the sequence is MAEPRQEFDVMEDHAQ. A disordered region spans residues 1-264; sequence MAEPRQEFDV…GPMPDLKNVK (264 aa). Position 2 is an N-acetylalanine (alanine 2). Tyrosine 19 bears the Phosphotyrosine mark. A Glycyl lysine isopeptide (Lys-Gly) (interchain with G-Cter in ubiquitin) cross-link involves residue lysine 33. Phosphoserine is present on residues serine 35 and serine 50. Residues 50–60 show a composition bias toward polar residues; the sequence is SETSDAKSTPT. Residues threonine 58 and threonine 60 each carry the phosphothreonine modification. Low complexity predominate over residues 71–89; sequence EGAPGEQAAAQAPAEIPEG. Threonine 100 carries the phosphothreonine modification. Over residues 119 to 135 the composition is skewed to basic and acidic residues; sequence KGKDGTGPDDKKTKGAD. Position 144 is a phosphothreonine (threonine 144). Arginine 146 carries the omega-N-methylarginine modification. Lysine 154 carries the post-translational modification N6,N6-dimethyllysine; alternate. Lysine 154 carries the post-translational modification N6-acetyllysine; alternate. A phosphothreonine mark is found at threonine 160, threonine 166, threonine 167, and threonine 172. Residues 163–176 are compositionally biased toward low complexity; sequence PAKTTPTPKTSPAT. Positions 189 to 200 are enriched in basic and acidic residues; the sequence is KSERGESGKSGD. A phosphoserine mark is found at serine 198 and serine 202. Positions 201-221 are enriched in low complexity; sequence RSGYSSPGSPGTPGSRSRTPS. Phosphotyrosine is present on tyrosine 204. A phosphoserine mark is found at serine 205, serine 206, and serine 209. Threonine 212 and threonine 219 each carry phosphothreonine. Phosphoserine is present on serine 221. At threonine 224 the chain carries Phosphothreonine. Lysine 232 carries the N6-acetyllysine modification. Phosphothreonine is present on threonine 238. Residues serine 242 and serine 244 each carry the phosphoserine modification. Tau/MAP repeat units follow at residues 251–281, 282–312, 313–343, and 344–375; these read QAAPGPMPDLKNVKSKIGSTENLKHQPGGGK, VQIINKKLDLSNVQSKCGSKDNIKHVPGGGS, VQIVYKPVDLSKVTSKCGSLGNIHHKPGGGQ, and VEVKSEKLDFKDRVQSKIGSLDNITHVPGGGN. Lysine 261 is covalently cross-linked (Glycyl lysine isopeptide (Lys-Gly) (interchain with G-Cter in ubiquitin)). At lysine 266 the chain carries N6-acetyllysine; alternate. Position 266 is an N6-methyllysine; alternate (lysine 266). Lysine 266 is covalently cross-linked (Glycyl lysine isopeptide (Lys-Gly) (interchain with G-Cter in ubiquitin); alternate). At serine 269 the chain carries Phosphoserine. Residue lysine 274 forms a Glycyl lysine isopeptide (Lys-Gly) (interchain with G-Cter in ubiquitin) linkage. Lysine 288 is modified (N6-acetyllysine; alternate). Residue lysine 288 forms a Glycyl lysine isopeptide (Lys-Gly) (interchain with G-Cter in ubiquitin); alternate linkage. Phosphoserine is present on residues serine 292 and serine 296. An N6-acetyllysine modification is found at lysine 297. The cysteines at positions 298 and 329 are disulfide-linked. Residue serine 300 is modified to Phosphoserine. Lysine 305 is subject to N6-acetyllysine; alternate. Lysine 305 is covalently cross-linked (Glycyl lysine isopeptide (Lys-Gly) (interchain with G-Cter in ubiquitin); alternate). Serine 312 carries the phosphoserine modification. Lysine 318 is modified (N6,N6-dimethyllysine; alternate). Residues lysine 318, lysine 324, and lysine 328 each carry the N6-acetyllysine; alternate modification. Glycyl lysine isopeptide (Lys-Gly) (interchain with G-Cter in ubiquitin); alternate cross-links involve residues lysine 318, lysine 324, and lysine 328. Serine 331 is subject to Phosphoserine. N6-acetyllysine; alternate occurs at positions 338, 350, and 354. Glycyl lysine isopeptide (Lys-Gly) (interchain with G-Cter in ubiquitin); alternate cross-links involve residues lysine 338, lysine 350, and lysine 354. Arginine 356 carries the omega-N-methylarginine modification. Serine 359 bears the Phosphoserine mark. Lysine 360 is covalently cross-linked (Glycyl lysine isopeptide (Lys-Gly) (interchain with G-Cter in ubiquitin)). Serine 363 carries the post-translational modification Phosphoserine. Lysine 376 is modified (N6-acetyllysine; alternate). Lysine 376 participates in a covalent cross-link: Glycyl lysine isopeptide (Lys-Gly) (interchain with G-Cter in ubiquitin); alternate. Residue lysine 382 forms a Glycyl lysine isopeptide (Lys-Gly) (interchain with G-Cter in ubiquitin) linkage. Lysine 392 carries the post-translational modification N6-acetyllysine; alternate. Residue lysine 392 forms a Glycyl lysine isopeptide (Lys-Gly) (interchain with G-Cter in ubiquitin); alternate linkage. Tyrosine 401 bears the Phosphotyrosine mark. Phosphoserine is present on residues serine 403 and serine 407. The disordered stretch occupies residues 405–424; it reads VVSGDTSPRHLSNVSSTGSI. Positions 408–423 are enriched in polar residues; the sequence is GDTSPRHLSNVSSTGS. Residue threonine 410 is modified to Phosphothreonine. Phosphoserine occurs at positions 411, 416, 423, and 429. Threonine 434 carries the post-translational modification Phosphothreonine.

As to quaternary structure, interacts with MARK1, MARK2, MARK3 and MARK4. Interacts with SQSTM1 when polyubiquitinated. Interacts with PSMC2 through SQSTM1. Interacts with FKBP4. Binds to CSNK1D. Interacts with SGK1. Interacts with PIN1. Interacts with LRRK2. Interacts with LRP1, leading to endocytosis; this interaction is reduced in the presence of LRPAP1/RAP. In terms of processing, polyubiquitinated. Requires functional TRAF6 and may provoke SQSTM1-dependent degradation by the proteasome. Phosphorylation at various serine and threonine residues in S-P or T-P motifs by proline-directed protein kinases (PDPK1, CDK1, CDK5, GSK3, MAPK) (a few sites per protein in interphase, more in mitosis), and at serine residues in K-X-G-S motifs by MAP/microtubule affinity-regulating kinase (MARK1, MARK2, MARK3, MARK4), causing detachment from microtubules, and their disassembly. Phosphorylation at Ser-269 by BRSK1 and BRSK2 in neurons affects ability to bind microtubules and plays a role in neuron polarization. Phosphorylated by PHK. Dephosphorylation at several serine and threonine residues by the serine/threonine phosphatase PPP5C. Post-translationally, O-glycosylated; contains at least 4 GlcNAc. Site-specific or stoichiometric changes in glycosylation may modulate tau function and also play a role in PHF's formation. As to expression, expressed in neurons.

It localises to the cytoplasm. It is found in the cytosol. The protein localises to the cell membrane. Its subcellular location is the cytoskeleton. The protein resides in the cell projection. It localises to the axon. It is found in the dendrite. The protein localises to the secreted. Its function is as follows. Promotes microtubule assembly and stability, and might be involved in the establishment and maintenance of neuronal polarity. The C-terminus binds axonal microtubules while the N-terminus binds neural plasma membrane components, suggesting that tau functions as a linker protein between both. Axonal polarity is predetermined by tau localization (in the neuronal cell) in the domain of the cell body defined by the centrosome. The short isoforms allow plasticity of the cytoskeleton whereas the longer isoforms may preferentially play a role in its stabilization. In Bos taurus (Bovine), this protein is Microtubule-associated protein tau (MAPT).